The sequence spans 201 residues: MSSVNLTSLGANQLKNTTTGEMVEIGSLWREQAVVLFFLRRFGCQVCRWMAAEVSKLEKDLKAHGIALVGIGPEETGVKEFKDGGFFKGDIYIDEMKQCYKDLGFKRYNAINVVPAAMGKKVREIASKASAEGIQGNFSGDLLQSGGMLIVAKGGEKVLLHFIQKSPADNPPLEEITKALGISANVQAGEKPQCNEDVCTR.

It belongs to the peroxiredoxin-like PRXL2 family. Prostamide/prostaglandin F synthase subfamily.

Its subcellular location is the cytoplasm. The protein localises to the cytosol. It carries out the reaction prostaglandin H2 + [thioredoxin]-dithiol = prostaglandin F2alpha + [thioredoxin]-disulfide. The enzyme catalyses prostamide F2alpha + [thioredoxin]-disulfide = prostamide H2 + [thioredoxin]-dithiol. Catalyzes the reduction of prostaglandin-ethanolamide H(2) (prostamide H(2)) to prostamide F(2alpha) with NADPH as proton donor. Also able to reduce prostaglandin H(2) to prostaglandin F(2alpha). This chain is Prostamide/prostaglandin F synthase (prxl2b), found in Danio rerio (Zebrafish).